Here is a 517-residue protein sequence, read N- to C-terminus: Zinc finger protein 215 (517 aa).

The 79-residue stretch at arginine 48–valine 126 folds into the SCAN box domain. The KRAB domain occupies valine 164–phenylalanine 237. C2H2-type zinc fingers lie at residues tyrosine 379 to histidine 401, tyrosine 407 to histidine 429, tyrosine 462 to histidine 484, and phenylalanine 490 to histidine 512.

The protein belongs to the krueppel C2H2-type zinc-finger protein family.

It localises to the nucleus. May be involved in transcriptional regulation. In Homo sapiens (Human), this protein is Zinc finger protein 215 (ZNF215).